The chain runs to 457 residues: Argininosuccinate lyase (457 aa).

This sequence belongs to the lyase 1 family. Argininosuccinate lyase subfamily.

It localises to the cytoplasm. It carries out the reaction 2-(N(omega)-L-arginino)succinate = fumarate + L-arginine. It participates in amino-acid biosynthesis; L-arginine biosynthesis; L-arginine from L-ornithine and carbamoyl phosphate: step 3/3. In Klebsiella pneumoniae subsp. pneumoniae (strain ATCC 700721 / MGH 78578), this protein is Argininosuccinate lyase.